The primary structure comprises 356 residues: UDP-N-acetylglucosamine--N-acetylmuramyl-(pentapeptide) pyrophosphoryl-undecaprenol N-acetylglucosamine transferase (356 aa).

Residues 12–14 (TGG), Asn-124, Arg-163, Ser-188, Ile-242, 261–266 (ALTVSE), and Gln-287 contribute to the UDP-N-acetyl-alpha-D-glucosamine site.

It belongs to the glycosyltransferase 28 family. MurG subfamily.

The protein resides in the cell inner membrane. The enzyme catalyses di-trans,octa-cis-undecaprenyl diphospho-N-acetyl-alpha-D-muramoyl-L-alanyl-D-glutamyl-meso-2,6-diaminopimeloyl-D-alanyl-D-alanine + UDP-N-acetyl-alpha-D-glucosamine = di-trans,octa-cis-undecaprenyl diphospho-[N-acetyl-alpha-D-glucosaminyl-(1-&gt;4)]-N-acetyl-alpha-D-muramoyl-L-alanyl-D-glutamyl-meso-2,6-diaminopimeloyl-D-alanyl-D-alanine + UDP + H(+). It participates in cell wall biogenesis; peptidoglycan biosynthesis. Cell wall formation. Catalyzes the transfer of a GlcNAc subunit on undecaprenyl-pyrophosphoryl-MurNAc-pentapeptide (lipid intermediate I) to form undecaprenyl-pyrophosphoryl-MurNAc-(pentapeptide)GlcNAc (lipid intermediate II). The chain is UDP-N-acetylglucosamine--N-acetylmuramyl-(pentapeptide) pyrophosphoryl-undecaprenol N-acetylglucosamine transferase from Pseudomonas fluorescens (strain ATCC BAA-477 / NRRL B-23932 / Pf-5).